The chain runs to 811 residues: MDNLLVRGLTHKLYDKRKATAYELERVVKGYLENDETEKIRAVISQLANDFVYSPARGPNATFGGLIGLAAVAIALGPKIDSYMESILLPVLYCFNDSDSKIRYYACESMYNIGKVAKGEVFRYFNLIFDVLCKLFADTEITVKNGAELLDRLIKDIVMQQAATYMSSAEDIKNFKEGPVSSSIQDVPVMSTEQPRMHTFSLSELVPLLSERLYVINPNTRMFLVSWIRLLDSIPDLEFISYLPFLLDGLMNYLSDPNESIRIVTSNCLYDFLREIQKIAKVKYHILQRDEESEPDFFDSMVRRNMSDAELKEISDYVESSLRDGSFILEAHIQIDYKRILEIIIDHLGSSVPLIQEKALKWLFEFIYIAPKDVLLQIPKVLENLLPLMSNDENMRQSAKDLSQNLVILVSKIMDIEFSGSETNNKDNSLSVDFRSLIEVLQKLLSNDNEETRLCALEWVLLLQRRTGGKLINMHDPIFQTLLLQLSDPSDLVVSRTLELLAHIAISHKSVNLVPFLKSLLQMFAEDRKFLNSRGNLIIRQLCNYIEGERVYTSFAGILETEENLELASIMVEVLNNNLFTAPELYDLRKKLKQSAPKLQNIFTTLYTAWCHNSIAVFSLCLLSQNYEHAANLLSVFAEIEFNIDMLIQLDKLVQLIESPVFTYMRLQLLEPEKYPYLHKALYGILMLLPQSSAFRTLRDRLQCSSTPRTNTILANERLPRSRRDDPYWTDLLERLKAVQLSHQNNYREPIRATRLALAGALPSTPTATTISTTTSASGITTTASNSRDSFITRLPPTAALSTGARKKPKQ.

HEAT repeat units lie at residues 81 to 119, 122 to 160, 240 to 278, 334 to 372, 375 to 412, 431 to 469, and 472 to 510; these read DSYM…VAKG, FRYF…IVMQ, ISYL…EIQK, QIDY…IAPK, LLQI…LVSK, SVDF…RTGG, and INMH…SHKS. Low complexity predominate over residues 775–785; that stretch reads TSASGITTTAS. A disordered region spans residues 775 to 811; it reads TSASGITTTASNSRDSFITRLPPTAALSTGARKKPKQ.

This sequence belongs to the VAC14 family. As to quaternary structure, component of the PI(3,5)P2 regulatory complex, composed of ATG18, FIG4, FAB1, VAC14 and VAC7. VAC14 nucleates the assembly of the complex and serves as a scaffold.

It is found in the cytoplasm. It localises to the vacuole membrane. The PI(3,5)P2 regulatory complex regulates both the synthesis and turnover of phosphatidylinositol 3,5-bisphosphate (PtdIns(3,5)P2). Regulates the synthesis of PtdIns(3,5)P2 by positive activation of FAB1 and by controlling FIG4 localization. This is Protein VAC14 homolog from Schizosaccharomyces pombe (strain 972 / ATCC 24843) (Fission yeast).